The following is a 291-amino-acid chain: Ribosomal RNA small subunit methyltransferase H (291 aa).

S-adenosyl-L-methionine contacts are provided by residues G31–Y33, D49, F76, D97, and Q104.

This sequence belongs to the methyltransferase superfamily. RsmH family.

Its subcellular location is the cytoplasm. The catalysed reaction is cytidine(1402) in 16S rRNA + S-adenosyl-L-methionine = N(4)-methylcytidine(1402) in 16S rRNA + S-adenosyl-L-homocysteine + H(+). In terms of biological role, specifically methylates the N4 position of cytidine in position 1402 (C1402) of 16S rRNA. This chain is Ribosomal RNA small subunit methyltransferase H, found in Anaplasma marginale (strain St. Maries).